The chain runs to 97 residues: Cytochrome c2 iso-2 (97 aa).

4 residues coordinate heme c: Cys-10, Cys-13, His-14, and Met-75.

This sequence belongs to the cytochrome c family. In terms of processing, binds 1 heme c group covalently per subunit.

In terms of biological role, cytochrome c2 is found mainly in purple, non-sulfur, photosynthetic bacteria where it functions as the electron donor to the oxidized bacteriochlorophyll in the photophosphorylation pathway. However, it may also have a role in the respiratory chain and is found in some non-photosynthetic bacteria. This is Cytochrome c2 iso-2 from Magnetospirillum molischianum (Rhodospirillum molischianum).